The chain runs to 140 residues: Cytochrome B5 isoform D (140 aa).

Residues 5–81 enclose the Cytochrome b5 heme-binding domain; the sequence is GKVFTLSEVS…LDEYYVGDID (77 aa). Heme is bound by residues His-40 and His-64. Residues 109–129 form a helical membrane-spanning segment; it reads FVIKLLQFLVPLLILGLAFGI.

Belongs to the cytochrome b5 family. In terms of assembly, interacts with CER1, BI-1, FAH1 and FAH2. In terms of tissue distribution, expressed in roots, stems, leaves, flowers and siliques.

The protein localises to the endoplasmic reticulum membrane. Functionally, membrane bound hemoprotein which function as an electron carrier for several membrane bound oxygenases, including fatty acid desaturases. The protein is Cytochrome B5 isoform D of Arabidopsis thaliana (Mouse-ear cress).